A 167-amino-acid chain; its full sequence is Ubiquitin-conjugating enzyme E2 2 (167 aa).

In terms of domain architecture, UBC core spans 4–150 (PARRRLMRDF…VKETVEKSWE (147 aa)). Cys-88 acts as the Glycyl thioester intermediate in catalysis. The disordered stretch occupies residues 148–167 (SWEDNMDDMDDSDEDDEDDE). The span at 151 to 167 (DNMDDMDDSDEDDEDDE) shows a compositional bias: acidic residues.

This sequence belongs to the ubiquitin-conjugating enzyme family.

The protein localises to the cytoplasm. It localises to the nucleus. It carries out the reaction S-ubiquitinyl-[E1 ubiquitin-activating enzyme]-L-cysteine + [E2 ubiquitin-conjugating enzyme]-L-cysteine = [E1 ubiquitin-activating enzyme]-L-cysteine + S-ubiquitinyl-[E2 ubiquitin-conjugating enzyme]-L-cysteine.. It functions in the pathway protein modification; protein ubiquitination. Functionally, catalyzes the covalent attachment of ubiquitin to other proteins. Plays a role in transcription regulation by catalyzing the monoubiquitination of histone H2B to form H2BK123ub1. H2BK123ub1 gives a specific tag for epigenetic transcriptional activation and is also a prerequisite for H3K4me and H3K79me formation. Also involved in postreplication repair of UV-damaged DNA, in N-end rule-dependent protein degradation and in sporulation. The sequence is that of Ubiquitin-conjugating enzyme E2 2 (UBC2) from Candida glabrata (strain ATCC 2001 / BCRC 20586 / JCM 3761 / NBRC 0622 / NRRL Y-65 / CBS 138) (Yeast).